Here is a 273-residue protein sequence, read N- to C-terminus: MNNRVHQGHLARKRFGQNFLNDRFVIDSIVSAINPQKGQAMVEIGPGLAALTEPVGERLDKLTVIELDRDLAARLQTHPFLGPKLTIYQQDAMTMNFGELSAQLGQPLRVFGNLPYNISTPLMFHLFSYTDAIADMHFMLQKEVVNRLVAGPNSKAYGRLSVMAQYYCQVIPVLEVPPSAFTPPPKVDSAVVRLVPHATMPYPVKDIRVLSRITTEAFNQRRKTIRNSLGNLFSVETLTEMGIDPAMRAENISVAQYCQMANYLSENAPLKES.

Residues N18, L20, G45, E66, D91, and N113 each contribute to the S-adenosyl-L-methionine site.

The protein belongs to the class I-like SAM-binding methyltransferase superfamily. rRNA adenine N(6)-methyltransferase family. RsmA subfamily.

The protein resides in the cytoplasm. It carries out the reaction adenosine(1518)/adenosine(1519) in 16S rRNA + 4 S-adenosyl-L-methionine = N(6)-dimethyladenosine(1518)/N(6)-dimethyladenosine(1519) in 16S rRNA + 4 S-adenosyl-L-homocysteine + 4 H(+). Its function is as follows. Specifically dimethylates two adjacent adenosines (A1518 and A1519) in the loop of a conserved hairpin near the 3'-end of 16S rRNA in the 30S particle. May play a critical role in biogenesis of 30S subunits. The polypeptide is Ribosomal RNA small subunit methyltransferase A (Salmonella agona (strain SL483)).